A 72-amino-acid polypeptide reads, in one-letter code: Large ribosomal subunit protein bL31c (72 aa).

This sequence belongs to the bacterial ribosomal protein bL31 family. Type A subfamily. Part of the 50S ribosomal subunit.

Its subcellular location is the plastid. The protein resides in the chloroplast. Its function is as follows. Binds the 23S rRNA. This Trieres chinensis (Marine centric diatom) protein is Large ribosomal subunit protein bL31c.